Here is a 352-residue protein sequence, read N- to C-terminus: MSTSETNNIKAPNHVTEYDSVTNNIVVAALYKFTRFADFEEYREPILNIMLDNEVKGTLLIASEGINGTISGTRQGIDNVLEYLRSIDAIGSFTFKESYTDAQPFYRTKVKLKKEIVTMGVENIDPLQSVGRYVKPSDWNALISDPDVILIDTRNDYEVKIGTFQNAVNPNTETFREFPEYVAKELDPAKHKKVAMFCTGGIRCEKSTAFMREQGFEEVYHLEGGILKYLEEVPASDSMWEGDCFVFDNRVSVNHNLEKGSYEQCFACRMPITQAEMQSPAYIKGESCPHCIDKATDEQKARFREREHQMQLAQKRGEAHIGSDVIDVIEKRKAAKIEARRQADEANKAKAD.

The 95-residue stretch at 144-238 (SDPDVILIDT…YLEEVPASDS (95 aa)) folds into the Rhodanese domain. Catalysis depends on cysteine 198, which acts as the Cysteine persulfide intermediate.

This sequence belongs to the TrhO family.

The enzyme catalyses uridine(34) in tRNA + AH2 + O2 = 5-hydroxyuridine(34) in tRNA + A + H2O. Functionally, catalyzes oxygen-dependent 5-hydroxyuridine (ho5U) modification at position 34 in tRNAs. This is tRNA uridine(34) hydroxylase from Psychrobacter arcticus (strain DSM 17307 / VKM B-2377 / 273-4).